A 30-amino-acid chain; its full sequence is AELTSCFPVDHECDGGASNCNCCGDDVYCA.

2 disulfide bridges follow: cysteine 6/cysteine 23 and cysteine 13/cysteine 29.

This sequence belongs to the neurotoxin 04 (omega-agtx) family. 02 (Tx1) subfamily. In terms of tissue distribution, expressed by the venom gland.

It is found in the secreted. Lethal neurotoxin. Causes spastic paralysis and death in mice in 4-6 minutes after intracerebroventricular injection at dose levels of 1.5 ug per mouse. The sequence is that of U5-ctenitoxin-Pk1b from Phoneutria keyserlingi (Brazilian wandering spider).